The sequence spans 273 residues: 4-hydroxy-tetrahydrodipicolinate reductase (273 aa).

11–16 (GAGGRM) provides a ligand contact to NAD(+). An NADP(+)-binding site is contributed by R37. Residues 100-102 (GTT) and 124-127 (AANY) contribute to the NAD(+) site. The active-site Proton donor/acceptor is the H157. H158 contributes to the (S)-2,3,4,5-tetrahydrodipicolinate binding site. K161 functions as the Proton donor in the catalytic mechanism. 167–168 (GT) provides a ligand contact to (S)-2,3,4,5-tetrahydrodipicolinate.

It belongs to the DapB family.

Its subcellular location is the cytoplasm. The enzyme catalyses (S)-2,3,4,5-tetrahydrodipicolinate + NAD(+) + H2O = (2S,4S)-4-hydroxy-2,3,4,5-tetrahydrodipicolinate + NADH + H(+). The catalysed reaction is (S)-2,3,4,5-tetrahydrodipicolinate + NADP(+) + H2O = (2S,4S)-4-hydroxy-2,3,4,5-tetrahydrodipicolinate + NADPH + H(+). The protein operates within amino-acid biosynthesis; L-lysine biosynthesis via DAP pathway; (S)-tetrahydrodipicolinate from L-aspartate: step 4/4. Functionally, catalyzes the conversion of 4-hydroxy-tetrahydrodipicolinate (HTPA) to tetrahydrodipicolinate. The chain is 4-hydroxy-tetrahydrodipicolinate reductase from Acinetobacter baumannii (strain AB307-0294).